A 496-amino-acid polypeptide reads, in one-letter code: Solute carrier family 2, facilitated glucose transporter member 3 (496 aa).

Residues 1-10 (MGTQKVTPAL) lie on the Cytoplasmic side of the membrane. The chain crosses the membrane as a helical span at residues 11–32 (IFAITVATIGSFQFGYNTGVIN). Over 33–64 (APEKIIKEFINKTLTDKGNAPPSEVLLTSLWS) the chain is Extracellular. An N-linked (GlcNAc...) asparagine glycan is attached at Asn-43. A helical membrane pass occupies residues 65-85 (LSVAIFSVGGMIGSFSVGLFV). At 86-90 (NRFGR) the chain is on the cytoplasmic side. A helical transmembrane segment spans residues 91–111 (RNSMLIVNLLAVTGGCFMGLC). Topologically, residues 112 to 118 (KVAKSVE) are extracellular. A helical transmembrane segment spans residues 119–142 (MLILGRLIIGLFCGLCTGFVPMYI). Topologically, residues 143–153 (GEISPTALRGA) are cytoplasmic. Residues 154–174 (FGTLNQLGIVVGILVAQIFGL) traverse the membrane as a helical segment. Residue Gln-159 participates in D-glucose binding. Over 175-183 (EFILGSEEL) the chain is Extracellular. A helical transmembrane segment spans residues 184 to 204 (WPLLLGFTILPTILQSAALPF). Residues 205 to 269 (CPESPRFLLI…LFRVSSYRQP (65 aa)) are Cytoplasmic-facing. Thr-232 is subject to Phosphothreonine. The chain crosses the membrane as a helical span at residues 270–290 (IIISIVLQLSQQLSGINAVFY). Residues 277 to 279 (QLS) form an important for selectivity against fructose region. Residues 280-281 (QQ) and Asn-286 each bind D-glucose. Topologically, residues 291–304 (YSTGIFKDAGVQEP) are extracellular. The chain crosses the membrane as a helical span at residues 305 to 325 (IYATIGAGVVNTIFTVVSLFL). D-glucose is bound at residue Asn-315. The Cytoplasmic segment spans residues 326–331 (VERAGR). Residues 332-352 (RTLHMIGLGGMAFCSTLMTVS) form a helical membrane-spanning segment. Topologically, residues 353-363 (LLLKDNYNGMS) are extracellular. Residues 364 to 389 (FVCIGAILVFVAFFEIGPGPIPWFIV) traverse the membrane as a helical segment. Glu-378 and Trp-386 together coordinate D-glucose. Topologically, residues 390–399 (AELFSQGPRP) are cytoplasmic. The helical transmembrane segment at 400 to 420 (AAMAVAGCSNWTSNFLVGLLF) threads the bilayer. At 421–429 (PSAAHYLGA) the chain is on the extracellular side. A helical membrane pass occupies residues 430-450 (YVFIIFTGFLITFLAFTFFKV). The Cytoplasmic segment spans residues 451-496 (PETRGRTFEDITRAFEGQAHGADRSGKDGVMEVNSIEPAKETTTNV). 2 positions are modified to phosphoserine: Ser-475 and Ser-485. Thr-492 is subject to Phosphothreonine.

This sequence belongs to the major facilitator superfamily. Sugar transporter (TC 2.A.1.1) family. Glucose transporter subfamily. As to quaternary structure, interacts with SMIM43; the interaction may promote SLC2A3-mediated glucose transport to meet the energy needs of mesendoderm differentiation.

The protein resides in the cell membrane. It localises to the perikaryon. Its subcellular location is the cell projection. It carries out the reaction D-glucose(out) = D-glucose(in). It catalyses the reaction D-galactose(in) = D-galactose(out). Deoxyglucose transport is inhibited by D-glucose, D-galactose and maltose. Galactose transport is inhibited by D-glucose and maltose. Its function is as follows. Facilitative glucose transporter. Can also mediate the uptake of various other monosaccharides across the cell membrane. Mediates the uptake of glucose, 2-deoxyglucose, galactose, mannose, xylose and fucose, and probably also dehydroascorbate. Does not mediate fructose transport. Required for mesendoderm differentiation. The protein is Solute carrier family 2, facilitated glucose transporter member 3 of Pongo abelii (Sumatran orangutan).